The following is a 514-amino-acid chain: 2,3-bisphosphoglycerate-independent phosphoglycerate mutase (514 aa).

Asp-14 and Ser-64 together coordinate Mn(2+). The Phosphoserine intermediate role is filled by Ser-64. Residues His-125, 155 to 156 (RD), Arg-187, Arg-193, 263 to 266 (RADR), and Lys-336 contribute to the substrate site. Mn(2+)-binding residues include Asp-403, His-407, Asp-444, His-445, and His-463.

This sequence belongs to the BPG-independent phosphoglycerate mutase family. Monomer. The cofactor is Mn(2+).

It carries out the reaction (2R)-2-phosphoglycerate = (2R)-3-phosphoglycerate. Its pathway is carbohydrate degradation; glycolysis; pyruvate from D-glyceraldehyde 3-phosphate: step 3/5. In terms of biological role, catalyzes the interconversion of 2-phosphoglycerate and 3-phosphoglycerate. The sequence is that of 2,3-bisphosphoglycerate-independent phosphoglycerate mutase from Shewanella sediminis (strain HAW-EB3).